A 534-amino-acid chain; its full sequence is CTP synthase (534 aa).

Positions 1 to 266 are amidoligase domain; sequence MKTKFIFVTG…DEQVVEKLNI (266 aa). CTP is bound at residue S14. Residue S14 coordinates UTP. Residues 15–20 and D72 each bind ATP; that span reads SIGKGL. Residues D72 and E140 each contribute to the Mg(2+) site. CTP is bound by residues 147–149, 187–192, and K223; these read DIE and KTKPTQ. Residues 187–192 and K223 each bind UTP; that span reads KTKPTQ. Residues 292–534 form the Glutamine amidotransferase type-1 domain; it reads RIAIVGKYVN…IAAALHNIKA (243 aa). G354 is a binding site for L-glutamine. Residue C381 is the Nucleophile; for glutamine hydrolysis of the active site. Residues 382–385, E405, and R462 each bind L-glutamine; that span reads LGMQ. Active-site residues include H507 and E509.

The protein belongs to the CTP synthase family. As to quaternary structure, homotetramer.

The enzyme catalyses UTP + L-glutamine + ATP + H2O = CTP + L-glutamate + ADP + phosphate + 2 H(+). It catalyses the reaction L-glutamine + H2O = L-glutamate + NH4(+). The catalysed reaction is UTP + NH4(+) + ATP = CTP + ADP + phosphate + 2 H(+). The protein operates within pyrimidine metabolism; CTP biosynthesis via de novo pathway; CTP from UDP: step 2/2. With respect to regulation, allosterically activated by GTP, when glutamine is the substrate; GTP has no effect on the reaction when ammonia is the substrate. The allosteric effector GTP functions by stabilizing the protein conformation that binds the tetrahedral intermediate(s) formed during glutamine hydrolysis. Inhibited by the product CTP, via allosteric rather than competitive inhibition. Catalyzes the ATP-dependent amination of UTP to CTP with either L-glutamine or ammonia as the source of nitrogen. Regulates intracellular CTP levels through interactions with the four ribonucleotide triphosphates. The protein is CTP synthase of Geotalea uraniireducens (strain Rf4) (Geobacter uraniireducens).